We begin with the raw amino-acid sequence, 486 residues long: Cysteine--tRNA ligase (486 aa).

Cysteine 29 contributes to the Zn(2+) binding site. The 'HIGH' region signature appears at 31-41 (ITVYDYCHLGH). Residues cysteine 215, histidine 240, and glutamate 244 each contribute to the Zn(2+) site. The 'KMSKS' region motif lies at 272–276 (KMSKS). Position 275 (lysine 275) interacts with ATP.

Belongs to the class-I aminoacyl-tRNA synthetase family. Monomer. It depends on Zn(2+) as a cofactor.

Its subcellular location is the cytoplasm. It carries out the reaction tRNA(Cys) + L-cysteine + ATP = L-cysteinyl-tRNA(Cys) + AMP + diphosphate. The protein is Cysteine--tRNA ligase of Gloeothece citriformis (strain PCC 7424) (Cyanothece sp. (strain PCC 7424)).